A 1069-amino-acid polypeptide reads, in one-letter code: Thyrotropin-releasing hormone-degrading ectoenzyme (1069 aa).

Acidic residues predominate over residues 1–11 (MALDGELGEQE). The interval 1–46 (MALDGELGEQEEEKKKKKKKKRKKKKEEEEEEEGAEKSSSPFAAAM) is disordered. Residues 1–85 (MALDGELGEQ…ERHIAVHKRL (85 aa)) lie on the Cytoplasmic side of the membrane. Over residues 15–25 (KKKKKKKRKKK) the composition is skewed to basic residues. A helical; Signal-anchor for type II membrane protein transmembrane segment spans residues 86–106 (VLAFAVSLVALLAVTMLAVLL). At 107–1069 (SLRFDECGAS…FQWLGKALRH (963 aa)) the chain is on the extracellular side. Positions 117–179 (ATPGADGGPS…PSEEEREPWE (63 aa)) are disordered. The span at 121–136 (ADGGPSGFPERGGNGS) shows a compositional bias: gly residues. N134, N205, N220, N267, and N383 each carry an N-linked (GlcNAc...) asparagine glycan. 449 to 453 (AAMEN) contributes to the substrate binding site. H485 is a binding site for Zn(2+). Residue E486 is the Proton acceptor of the active site. Residues H489 and E508 each coordinate Zn(2+). 7 N-linked (GlcNAc...) asparagine glycosylation sites follow: N650, N679, N694, N708, N729, N845, and N951.

This sequence belongs to the peptidase M1 family. Homodimer; disulfide-linked. Requires Zn(2+) as cofactor. Predominantly expressed in brain.

It localises to the membrane. It carries out the reaction Release of the N-terminal pyroglutamyl group from pGlu-|-His-Xaa tripeptides and pGlu-|-His-Xaa-Gly tetrapeptides.. In terms of biological role, specific inactivation of TRH after its release. The protein is Thyrotropin-releasing hormone-degrading ectoenzyme (TRHDE) of Homo sapiens (Human).